A 96-amino-acid polypeptide reads, in one-letter code: Large ribosomal subunit protein bL28 (96 aa).

The segment at 1-24 (MSRSCELTGKGVQSGHNVSHANNK) is disordered.

Belongs to the bacterial ribosomal protein bL28 family.

In Sinorhizobium fredii (strain NBRC 101917 / NGR234), this protein is Large ribosomal subunit protein bL28.